A 443-amino-acid polypeptide reads, in one-letter code: BBSome complex member BBS5 homolog (443 aa).

The protein belongs to the BBS5 family.

Its subcellular location is the cytoplasm. The protein resides in the cytoskeleton. It localises to the flagellum axoneme. The chain is BBSome complex member BBS5 homolog from Giardia intestinalis (strain ATCC 50803 / WB clone C6) (Giardia lamblia).